Reading from the N-terminus, the 419-residue chain is Putative competence-damage inducible protein (419 aa).

It belongs to the CinA family.

This is Putative competence-damage inducible protein from Streptococcus agalactiae serotype Ia (strain ATCC 27591 / A909 / CDC SS700).